The chain runs to 439 residues: Enolase 1-1 (439 aa).

Threonine 85 is subject to Phosphothreonine. The substrate site is built by histidine 159 and glutamate 168. Glutamate 211 acts as the Proton donor in catalysis. Aspartate 246 contacts Mg(2+). A phosphoserine mark is found at serine 249 and serine 250. Tyrosine 253 carries the post-translational modification Phosphotyrosine. Residues glutamate 295 and aspartate 320 each contribute to the substrate site. The Mg(2+) site is built by glutamate 295 and aspartate 320. The Proton acceptor role is filled by lysine 345. Position 351 is a phosphoserine (serine 351). Phosphothreonine is present on threonine 353. Phosphoserine is present on serine 355. Residues 372 to 375 (SHRS) and lysine 396 contribute to the substrate site. Phosphoserine is present on serine 421.

Belongs to the enolase family. As to quaternary structure, homodimer. The cofactor is Mg(2+).

It localises to the cytoplasm. It catalyses the reaction (2R)-2-phosphoglycerate = phosphoenolpyruvate + H2O. It functions in the pathway carbohydrate degradation; glycolysis; pyruvate from D-glyceraldehyde 3-phosphate: step 4/5. In Schizosaccharomyces pombe (strain 972 / ATCC 24843) (Fission yeast), this protein is Enolase 1-1 (eno101).